A 465-amino-acid chain; its full sequence is Transposase for insertion sequence IS1202 (465 aa).

In terms of domain architecture, Integrase catalytic spans His-157–Ile-340.

Functionally, required for the transposition of the insertion element. In Streptococcus pneumoniae, this protein is Transposase for insertion sequence IS1202.